A 288-amino-acid chain; its full sequence is Probable endonuclease 4 (288 aa).

Residues His75, His115, Glu153, Asp187, His190, His224, Asp237, His239, and Glu269 each coordinate Zn(2+).

Belongs to the AP endonuclease 2 family. Requires Zn(2+) as cofactor.

It carries out the reaction Endonucleolytic cleavage to 5'-phosphooligonucleotide end-products.. Functionally, endonuclease IV plays a role in DNA repair. It cleaves phosphodiester bonds at apurinic or apyrimidinic (AP) sites, generating a 3'-hydroxyl group and a 5'-terminal sugar phosphate. The polypeptide is Probable endonuclease 4 (Chlamydia trachomatis serovar L2 (strain ATCC VR-902B / DSM 19102 / 434/Bu)).